The primary structure comprises 474 residues: tRNA-2-methylthio-N(6)-dimethylallyladenosine synthase (474 aa).

Residues Lys3–Gly120 form the MTTase N-terminal domain. [4Fe-4S] cluster contacts are provided by Cys12, Cys49, Cys83, Cys157, Cys161, and Cys164. In terms of domain architecture, Radical SAM core spans Arg143–Gln375. The TRAM domain occupies Arg378–Arg441.

This sequence belongs to the methylthiotransferase family. MiaB subfamily. As to quaternary structure, monomer. [4Fe-4S] cluster serves as cofactor.

The protein resides in the cytoplasm. It catalyses the reaction N(6)-dimethylallyladenosine(37) in tRNA + (sulfur carrier)-SH + AH2 + 2 S-adenosyl-L-methionine = 2-methylsulfanyl-N(6)-dimethylallyladenosine(37) in tRNA + (sulfur carrier)-H + 5'-deoxyadenosine + L-methionine + A + S-adenosyl-L-homocysteine + 2 H(+). Catalyzes the methylthiolation of N6-(dimethylallyl)adenosine (i(6)A), leading to the formation of 2-methylthio-N6-(dimethylallyl)adenosine (ms(2)i(6)A) at position 37 in tRNAs that read codons beginning with uridine. This chain is tRNA-2-methylthio-N(6)-dimethylallyladenosine synthase, found in Sodalis glossinidius (strain morsitans).